Here is a 327-residue protein sequence, read N- to C-terminus: L-serine dehydratase/L-threonine deaminase (327 aa).

N-acetylalanine is present on Ala-2. Lys-41 carries the N6-(pyridoxal phosphate)lysine modification. Pro-128 lines the pyridoxal 5'-phosphate pocket.

Belongs to the serine/threonine dehydratase family. Homodimer. The cofactor is pyridoxal 5'-phosphate.

The protein resides in the cytoplasm. The enzyme catalyses L-serine = pyruvate + NH4(+). The catalysed reaction is L-threonine = 2-oxobutanoate + NH4(+). It participates in carbohydrate biosynthesis; gluconeogenesis. In terms of biological role, catalyzes the pyridoxal-phosphate-dependent dehydrative deamination of L-threonine and L-serine to ammonia and alpha-ketobutyrate and pyruvate, respectively. This chain is L-serine dehydratase/L-threonine deaminase (Sds), found in Mus musculus (Mouse).